Consider the following 248-residue polypeptide: 1-(5-phosphoribosyl)-5-[(5-phosphoribosylamino)methylideneamino] imidazole-4-carboxamide isomerase (248 aa).

Asp8 serves as the catalytic Proton acceptor. Asp129 acts as the Proton donor in catalysis.

Belongs to the HisA/HisF family.

The protein localises to the cytoplasm. The enzyme catalyses 1-(5-phospho-beta-D-ribosyl)-5-[(5-phospho-beta-D-ribosylamino)methylideneamino]imidazole-4-carboxamide = 5-[(5-phospho-1-deoxy-D-ribulos-1-ylimino)methylamino]-1-(5-phospho-beta-D-ribosyl)imidazole-4-carboxamide. Its pathway is amino-acid biosynthesis; L-histidine biosynthesis; L-histidine from 5-phospho-alpha-D-ribose 1-diphosphate: step 4/9. The polypeptide is 1-(5-phosphoribosyl)-5-[(5-phosphoribosylamino)methylideneamino] imidazole-4-carboxamide isomerase (Sinorhizobium medicae (strain WSM419) (Ensifer medicae)).